The chain runs to 564 residues: Phomacin cluster regulator phmR (564 aa).

Positions cysteine 33 to cysteine 64 form a DNA-binding region, zn(2)-C6 fungal-type. Disordered regions lie at residues serine 68 to alanine 93, aspartate 152 to leucine 197, and proline 252 to threonine 278. 2 stretches are compositionally biased toward polar residues: residues isoleucine 182–valine 192 and methionine 258–threonine 278.

Its subcellular location is the nucleus. Its function is as follows. Transcription factor that specifically regulates the expression of the gene cluster that mediates the biosynthesis of the mycotoxins phomacins, leucine-derived cytochalasans with potent actin polymerization-inhibitory activities and monocot-specific antigerminative activities. The chain is Phomacin cluster regulator phmR from Phaeosphaeria nodorum (strain SN15 / ATCC MYA-4574 / FGSC 10173) (Glume blotch fungus).